Reading from the N-terminus, the 473-residue chain is Glutamate--tRNA ligase 1 (473 aa).

The short motif at 11–21 (PSPTGYLHIGG) is the 'HIGH' region element. The span at 113 to 133 (KARAEGRPPRYDGRWRDRDPS) shows a compositional bias: basic and acidic residues. The disordered stretch occupies residues 113 to 136 (KARAEGRPPRYDGRWRDRDPSEAP). The 'KMSKS' region motif lies at 240–244 (KLSKR). Lys243 serves as a coordination point for ATP.

It belongs to the class-I aminoacyl-tRNA synthetase family. Glutamate--tRNA ligase type 1 subfamily. As to quaternary structure, monomer.

It localises to the cytoplasm. It carries out the reaction tRNA(Glu) + L-glutamate + ATP = L-glutamyl-tRNA(Glu) + AMP + diphosphate. Catalyzes the attachment of glutamate to tRNA(Glu) in a two-step reaction: glutamate is first activated by ATP to form Glu-AMP and then transferred to the acceptor end of tRNA(Glu). This chain is Glutamate--tRNA ligase 1, found in Brucella melitensis biotype 1 (strain ATCC 23456 / CCUG 17765 / NCTC 10094 / 16M).